The following is a 237-amino-acid chain: Protein lin-31 (237 aa).

The fork-head DNA-binding region spans 12 to 103 (QKPPYSYIWL…SGMFENGSCL (92 aa)). Disordered stretches follow at residues 110–141 (RARG…LLPE) and 195–237 (NFES…ILSS). Low complexity-rich tracts occupy residues 206–216 (SEISGSGSSSS) and 227–237 (SSFSIESILSS).

Its subcellular location is the nucleus. Its function is as follows. Lin-31 regulates how vulval precursor cells choose their fate. It helps specify three alternative cell fates in vulval development. In Caenorhabditis elegans, this protein is Protein lin-31 (lin-31).